The following is a 211-amino-acid chain: Regulator of G-protein signaling 2 (211 aa).

A necessary for membrane association region spans residues 32–66 (KMKRTLLKDWKTRLSYFLQNSSTPGKPKTGKKSKQ). The interval 79–116 (LWAEAFDELLASKYGLAAFRAFLKSEFCEENIEFWLAC) is necessary to inhibit protein synthesis. In terms of domain architecture, RGS spans 83–199 (AFDELLASKY…LESEFYQDLC (117 aa)).

Interacts with GNAQ. Does not interact with GNAI1 and GNAI3. Interacts with EIF2B5. Interacts with PRKG1 (isoform alpha). Post-translationally, phosphorylated by protein kinase C. Phosphorylation by PRKG1 leads to activation of RGS2 activity.

It is found in the cell membrane. The protein localises to the cytoplasm. Its subcellular location is the nucleus. It localises to the nucleolus. Regulates G protein-coupled receptor signaling cascades. Inhibits signal transduction by increasing the GTPase activity of G protein alpha subunits, thereby driving them into their inactive GDP-bound form. It is involved in the negative regulation of the angiotensin-activated signaling pathway. Plays a role in the regulation of blood pressure in response to signaling via G protein-coupled receptors and GNAQ. Plays a role in regulating the constriction and relaxation of vascular smooth muscle. Binds EIF2B5 and blocks its activity, thereby inhibiting the translation of mRNA into protein. In Rattus norvegicus (Rat), this protein is Regulator of G-protein signaling 2 (Rgs2).